The primary structure comprises 559 residues: 2,3-bisphosphoglycerate-independent phosphoglycerate mutase (559 aa).

Mn(2+)-binding residues include aspartate 28 and serine 81. Serine 81 serves as the catalytic Phosphoserine intermediate. Residues histidine 140, 170 to 171 (RD), arginine 206, arginine 213, 286 to 289 (RADR), and lysine 361 each bind substrate. Residues aspartate 430, histidine 434, aspartate 471, histidine 472, and histidine 501 each contribute to the Mn(2+) site.

It belongs to the BPG-independent phosphoglycerate mutase family. As to quaternary structure, monomer. Requires Mn(2+) as cofactor.

It localises to the cytoplasm. It catalyses the reaction (2R)-2-phosphoglycerate = (2R)-3-phosphoglycerate. Its pathway is carbohydrate degradation; glycolysis; pyruvate from D-glyceraldehyde 3-phosphate: step 3/5. Its function is as follows. Catalyzes the interconversion of 2-phosphoglycerate and 3-phosphoglycerate. The polypeptide is 2,3-bisphosphoglycerate-independent phosphoglycerate mutase (PGM1) (Mesembryanthemum crystallinum (Common ice plant)).